A 135-amino-acid chain; its full sequence is Histone H2B.4 (135 aa).

Composition is skewed to basic and acidic residues over residues Met1 to Glu12 and Glu23 to Lys35. The interval Met1 to Lys43 is disordered. Residues Lys8 and Lys24 each carry the N6-acetyllysine modification. A Glycyl lysine isopeptide (Lys-Gly) (interchain with G-Cter in ubiquitin) cross-link involves residue Lys131.

It belongs to the histone H2B family. The nucleosome is a histone octamer containing two molecules each of H2A, H2B, H3 and H4 assembled in one H3-H4 heterotetramer and two H2A-H2B heterodimers. The octamer wraps approximately 147 bp of DNA. Can be acetylated to form H2BK6ac and H2BK33ac. Post-translationally, monoubiquitinated to form H2BK143ub1; may give a specific tag for epigenetic transcriptional activation. Expressed preferentially in meristematic tissues.

It localises to the nucleus. Its subcellular location is the chromosome. Core component of nucleosome. Nucleosomes wrap and compact DNA into chromatin, limiting DNA accessibility to the cellular machineries which require DNA as a template. Histones thereby play a central role in transcription regulation, DNA repair, DNA replication and chromosomal stability. DNA accessibility is regulated via a complex set of post-translational modifications of histones, also called histone code, and nucleosome remodeling. This chain is Histone H2B.4 (TH153), found in Triticum aestivum (Wheat).